The sequence spans 164 residues: NADH-quinone oxidoreductase subunit I 2 (164 aa).

2 consecutive 4Fe-4S ferredoxin-type domains span residues isoleucine 39 to alanine 71 and glutamate 81 to aspartate 110. Positions 51, 54, 57, 61, 90, 93, 96, and 100 each coordinate [4Fe-4S] cluster.

It belongs to the complex I 23 kDa subunit family. As to quaternary structure, NDH-1 is composed of 14 different subunits. Subunits NuoA, H, J, K, L, M, N constitute the membrane sector of the complex. Requires [4Fe-4S] cluster as cofactor.

It is found in the cell inner membrane. The catalysed reaction is a quinone + NADH + 5 H(+)(in) = a quinol + NAD(+) + 4 H(+)(out). Functionally, NDH-1 shuttles electrons from NADH, via FMN and iron-sulfur (Fe-S) centers, to quinones in the respiratory chain. The immediate electron acceptor for the enzyme in this species is believed to be ubiquinone. Couples the redox reaction to proton translocation (for every two electrons transferred, four hydrogen ions are translocated across the cytoplasmic membrane), and thus conserves the redox energy in a proton gradient. The chain is NADH-quinone oxidoreductase subunit I 2 from Cereibacter sphaeroides (strain ATCC 17023 / DSM 158 / JCM 6121 / CCUG 31486 / LMG 2827 / NBRC 12203 / NCIMB 8253 / ATH 2.4.1.) (Rhodobacter sphaeroides).